A 487-amino-acid chain; its full sequence is Cysteine--tRNA ligase (487 aa).

Zn(2+) is bound at residue Cys30. The 'HIGH' region signature appears at 32 to 42 (PTVYGHAHLGH). Cys226, His251, and Glu255 together coordinate Zn(2+). Positions 283 to 287 (KMGKS) match the 'KMSKS' region motif. Lys286 is an ATP binding site.

It belongs to the class-I aminoacyl-tRNA synthetase family. As to quaternary structure, monomer. It depends on Zn(2+) as a cofactor.

The protein resides in the cytoplasm. It carries out the reaction tRNA(Cys) + L-cysteine + ATP = L-cysteinyl-tRNA(Cys) + AMP + diphosphate. The polypeptide is Cysteine--tRNA ligase (cysS) (Chlorobaculum tepidum (strain ATCC 49652 / DSM 12025 / NBRC 103806 / TLS) (Chlorobium tepidum)).